Here is a 473-residue protein sequence, read N- to C-terminus: Cell division protein FtsP (473 aa).

Residues methionine 1–alanine 27 constitute a signal peptide (tat-type signal).

This sequence belongs to the FtsP family. In terms of processing, predicted to be exported by the Tat system. The position of the signal peptide cleavage has not been experimentally proven.

The protein resides in the periplasm. Its function is as follows. Cell division protein that is required for growth during stress conditions. May be involved in protecting or stabilizing the divisomal assembly under conditions of stress. The sequence is that of Cell division protein FtsP from Proteus mirabilis (strain HI4320).